Consider the following 545-residue polypeptide: Adenine deaminase (545 aa).

This sequence belongs to the metallo-dependent hydrolases superfamily. Adenine deaminase family. Mn(2+) serves as cofactor.

It carries out the reaction adenine + H2O + H(+) = hypoxanthine + NH4(+). This chain is Adenine deaminase, found in Salinibacter ruber (strain DSM 13855 / M31).